The chain runs to 628 residues: F-box only protein 21 (628 aa).

The 57-residue stretch at 28–84 (SCLVNLPGEVLEYILCCGSLTAADIGRVSSTCRRLRELCQSSGKVWKEQFRVRWPSL) folds into the F-box domain.

Directly interacts with SKP1 and CUL1.

In terms of biological role, substrate-recognition component of the SCF (SKP1-CUL1-F-box protein)-type E3 ubiquitin ligase complex. In Homo sapiens (Human), this protein is F-box only protein 21 (FBXO21).